Here is a 344-residue protein sequence, read N- to C-terminus: Dihydroorotase (344 aa).

His-13 and His-15 together coordinate Zn(2+). Substrate is bound by residues 15 to 17 and Asn-41; that span reads HLR. Lys-99, His-136, and His-174 together coordinate Zn(2+). The residue at position 99 (Lys-99) is an N6-carboxylysine. His-136 lines the substrate pocket. Residue Leu-219 participates in substrate binding. Residue Asp-247 coordinates Zn(2+). Asp-247 is an active-site residue. Substrate is bound by residues His-251 and Ala-263.

This sequence belongs to the metallo-dependent hydrolases superfamily. DHOase family. Class II DHOase subfamily. In terms of assembly, homodimer. Zn(2+) is required as a cofactor.

It catalyses the reaction (S)-dihydroorotate + H2O = N-carbamoyl-L-aspartate + H(+). Its pathway is pyrimidine metabolism; UMP biosynthesis via de novo pathway; (S)-dihydroorotate from bicarbonate: step 3/3. Its function is as follows. Catalyzes the reversible cyclization of carbamoyl aspartate to dihydroorotate. This Shewanella denitrificans (strain OS217 / ATCC BAA-1090 / DSM 15013) protein is Dihydroorotase.